We begin with the raw amino-acid sequence, 451 residues long: UPF0210 protein NMA1908 (451 aa).

This sequence belongs to the UPF0210 family. Homodimer.

This is UPF0210 protein NMA1908 from Neisseria meningitidis serogroup A / serotype 4A (strain DSM 15465 / Z2491).